Reading from the N-terminus, the 295-residue chain is Ethanolamine ammonia-lyase small subunit (295 aa).

The adenosylcob(III)alamin site is built by V207, E228, and C258.

The protein belongs to the EutC family. As to quaternary structure, the basic unit is a heterodimer which dimerizes to form tetramers. The heterotetramers trimerize; 6 large subunits form a core ring with 6 small subunits projecting outwards. The cofactor is adenosylcob(III)alamin.

Its subcellular location is the bacterial microcompartment. The enzyme catalyses ethanolamine = acetaldehyde + NH4(+). It participates in amine and polyamine degradation; ethanolamine degradation. Catalyzes the deamination of various vicinal amino-alcohols to oxo compounds. Allows this organism to utilize ethanolamine as the sole source of nitrogen and carbon in the presence of external vitamin B12. This Escherichia coli O157:H7 protein is Ethanolamine ammonia-lyase small subunit.